We begin with the raw amino-acid sequence, 327 residues long: Asnovolin J 5',6'-dehydrogenase nvfM (327 aa).

A helical membrane pass occupies residues valine 9–leucine 29. Residues glycine 13–glycine 19 and lysine 47 contribute to the NADP(+) site. The active-site Proton acceptor is lysine 130.

The protein belongs to the NmrA-type oxidoreductase family.

The protein resides in the membrane. The catalysed reaction is asnovolin K + AH2 = asnovolin A + A. The enzyme catalyses chermesin D methyl ester + AH2 = asnovolin J + A. Its pathway is secondary metabolite biosynthesis; terpenoid biosynthesis. In terms of biological role, asnovolin J 5',6'-dehydrogenase; part of the gene cluster that mediates the biosynthesis of novofumigatonin, a heavily oxygenated meroterpenoid containing a unique orthoester moiety. The first step of the pathway is the synthesis of 3,5-dimethylorsellinic acid (DMOA) by the polyketide synthase nvfA via condensation of one acetyl-CoA starter unit with 3 malonyl-CoA units and 2 methylations. DMOA is then converted to farnesyl-DMOA by the farnesyltransferase nvfB. Epoxydation by FAD-dependent monooxygenase nvfK, followed by a protonation-initiated cyclization catalyzed by the terpene cyclase nvfL leads to the production of asnavolin H. The short chain dehydrogenase nvfC then as a 3-OH dehydrogenase of asnovolin H to yield chemesin D. There are two branches to synthesize asnovolin A from chemesin D. In one branch, chemesin D undergoes Baeyer-Villiger oxidation by nvfH, methylation by nvfJ, and enoyl reduction by the nvfM D enoylreductase that reduces the double bond between C-5'and C-6', to form respectively asnovolin I, asnovolin K, and asnovolin A. In the other branch, the methylation precedes the Baeyer-Villiger oxidation and the enoyl reduction to yield asnovolin A via the asnovolin J intermediate. Asnovolin A is further converted to fumigatonoid A by the Fe(II)/2-oxoglutarate-dependent dioxygenase nvfI that catalyzes an endoperoxidation reaction. The alpha/beta hydrolase nvfD then acts as an epimerase that converts fumigatonoid A to its C-5' epimer, which then undergoes spontaneous or nvfD-catalyzed lactonization. The following step utilizes the ketoreductase nvfG to produce fumigatonoid B. The dioxygenase nvfE further converts fumigatonoid B into fumigatonoid C. Finally the Fe(II)/2-oxoglutarate-dependent dioxygenase nvfF catalyzes two rounds of oxidation to transform fumigatonoid C into the end product, novofumigatonin A. The chain is Asnovolin J 5',6'-dehydrogenase nvfM from Aspergillus novofumigatus (strain IBT 16806).